The chain runs to 316 residues: Tyrosine recombinase XerC (316 aa).

Positions 11–97 (SGLRKPLDQF…SLRSFFDFLI (87 aa)) constitute a Core-binding (CB) domain. The Tyr recombinase domain occupies 118–298 (PLPKNLDVDE…DFQHLADVYD (181 aa)). Catalysis depends on residues Arg157, Lys181, His250, Arg253, and His276. The O-(3'-phospho-DNA)-tyrosine intermediate role is filled by Tyr285.

It belongs to the 'phage' integrase family. XerC subfamily. In terms of assembly, forms a cyclic heterotetrameric complex composed of two molecules of XerC and two molecules of XerD.

Its subcellular location is the cytoplasm. In terms of biological role, site-specific tyrosine recombinase, which acts by catalyzing the cutting and rejoining of the recombining DNA molecules. The XerC-XerD complex is essential to convert dimers of the bacterial chromosome into monomers to permit their segregation at cell division. It also contributes to the segregational stability of plasmids. In Vibrio vulnificus (strain CMCP6), this protein is Tyrosine recombinase XerC.